The chain runs to 415 residues: Phosphoglycerate kinase (415 aa).

Residues 27–29 (DIN), Arg-44, 67–70 (HQGR), Arg-124, and Arg-164 each bind substrate. ATP-binding positions include Glu-336 and 362–365 (GGHM).

This sequence belongs to the phosphoglycerate kinase family. Monomer.

Its subcellular location is the cytoplasm. It carries out the reaction (2R)-3-phosphoglycerate + ATP = (2R)-3-phospho-glyceroyl phosphate + ADP. Its pathway is carbohydrate degradation; glycolysis; pyruvate from D-glyceraldehyde 3-phosphate: step 2/5. In Sulfurisphaera tokodaii (strain DSM 16993 / JCM 10545 / NBRC 100140 / 7) (Sulfolobus tokodaii), this protein is Phosphoglycerate kinase.